We begin with the raw amino-acid sequence, 96 residues long: UPF0235 protein Helmi_20270 (96 aa).

Belongs to the UPF0235 family.

In Heliobacterium modesticaldum (strain ATCC 51547 / Ice1), this protein is UPF0235 protein Helmi_20270.